Consider the following 585-residue polypeptide: Cytochrome c lysine N-methyltransferase 1 (585 aa).

In terms of domain architecture, SET spans 18-273 (KSLSLKPSTI…KPIEVFISYS (256 aa)). An SET-like region spans residues 186–288 (LNLSDIKHLY…FSMLVTYGFT (103 aa)).

Belongs to the class V-like SAM-binding methyltransferase superfamily.

Its subcellular location is the cytoplasm. It localises to the cytosol. The enzyme catalyses L-lysyl-[cytochrome c] + S-adenosyl-L-methionine = N(6)-methyl-L-lysyl-[cytochrome c] + S-adenosyl-L-homocysteine + H(+). Functionally, methyltransferase which mediates trimethylation of 'Lys-78' of cytochrome c (CYC1). This is Cytochrome c lysine N-methyltransferase 1 (CTM1) from Saccharomyces cerevisiae (strain ATCC 204508 / S288c) (Baker's yeast).